Reading from the N-terminus, the 339-residue chain is Glycerol-3-phosphate dehydrogenase [NAD(P)+] (339 aa).

NADPH contacts are provided by S15, Y16, H36, and K110. 3 residues coordinate sn-glycerol 3-phosphate: K110, G139, and T141. A143 lines the NADPH pocket. Sn-glycerol 3-phosphate-binding residues include K195, D248, S258, R259, and N260. K195 acts as the Proton acceptor in catalysis. An NADPH-binding site is contributed by R259. Residues V283 and E285 each contribute to the NADPH site.

This sequence belongs to the NAD-dependent glycerol-3-phosphate dehydrogenase family.

It is found in the cytoplasm. The enzyme catalyses sn-glycerol 3-phosphate + NAD(+) = dihydroxyacetone phosphate + NADH + H(+). The catalysed reaction is sn-glycerol 3-phosphate + NADP(+) = dihydroxyacetone phosphate + NADPH + H(+). It participates in membrane lipid metabolism; glycerophospholipid metabolism. In terms of biological role, catalyzes the reduction of the glycolytic intermediate dihydroxyacetone phosphate (DHAP) to sn-glycerol 3-phosphate (G3P), the key precursor for phospholipid synthesis. In Citrobacter koseri (strain ATCC BAA-895 / CDC 4225-83 / SGSC4696), this protein is Glycerol-3-phosphate dehydrogenase [NAD(P)+].